The chain runs to 406 residues: Cysteine desulfurase (406 aa).

Residue Lys226 is modified to N6-(pyridoxal phosphate)lysine. The active-site Cysteine persulfide intermediate is Cys364.

Belongs to the class-V pyridoxal-phosphate-dependent aminotransferase family. Csd subfamily. As to quaternary structure, homodimer. Interacts with SufE and the SufBCD complex composed of SufB, SufC and SufD. The interaction with SufE is required to mediate the direct transfer of the sulfur atom from the S-sulfanylcysteine. The cofactor is pyridoxal 5'-phosphate.

It localises to the cytoplasm. It catalyses the reaction (sulfur carrier)-H + L-cysteine = (sulfur carrier)-SH + L-alanine. It carries out the reaction L-selenocysteine + AH2 = hydrogenselenide + L-alanine + A + H(+). It functions in the pathway cofactor biosynthesis; iron-sulfur cluster biosynthesis. Functionally, cysteine desulfurases mobilize the sulfur from L-cysteine to yield L-alanine, an essential step in sulfur metabolism for biosynthesis of a variety of sulfur-containing biomolecules. Component of the suf operon, which is activated and required under specific conditions such as oxidative stress and iron limitation. Acts as a potent selenocysteine lyase in vitro, that mobilizes selenium from L-selenocysteine. Selenocysteine lyase activity is however unsure in vivo. This Klebsiella pneumoniae (strain 342) protein is Cysteine desulfurase.